A 399-amino-acid chain; its full sequence is Ribonuclease D (399 aa).

Positions 31 to 197 constitute a 3'-5' exonuclease domain; sequence RVVTDNTALL…PLYHILEKEL (167 aa). The 80-residue stretch at 239-318 folds into the HRDC domain; sequence NPLELSRLRV…SQARRISSND (80 aa).

Belongs to the RNase D family. It depends on a divalent metal cation as a cofactor.

The protein resides in the cytoplasm. It catalyses the reaction Exonucleolytic cleavage that removes extra residues from the 3'-terminus of tRNA to produce 5'-mononucleotides.. In terms of biological role, exonuclease involved in the 3' processing of various precursor tRNAs. Initiates hydrolysis at the 3'-terminus of an RNA molecule and releases 5'-mononucleotides. This is Ribonuclease D from Haemophilus influenzae (strain ATCC 51907 / DSM 11121 / KW20 / Rd).